A 215-amino-acid chain; its full sequence is MOB kinase activator-like 1B (215 aa).

A disordered region spans residues 1 to 29 (MSLFGLGSRNQKTFRPKKSAPTGSKGAQL). Residues Cys-80, Cys-85, His-162, and His-167 each contribute to the Zn(2+) site.

The protein belongs to the MOB1/phocein family. Constitutively expressed with higher expression in roots, flowers and pods than in leaves and stems.

Its subcellular location is the cytoplasm. It is found in the cytoskeleton. It localises to the phragmoplast. This is MOB kinase activator-like 1B from Medicago sativa subsp. falcata (Sickle medic).